We begin with the raw amino-acid sequence, 213 residues long: LexA repressor 2 (213 aa).

The segment at residues 27-47 is a DNA-binding region (H-T-H motif); the sequence is QTEIARAFGFKGVRAAQYHLE. Active-site for autocatalytic cleavage activity residues include Ser-133 and Lys-170.

It belongs to the peptidase S24 family. In terms of assembly, homodimer.

The enzyme catalyses Hydrolysis of Ala-|-Gly bond in repressor LexA.. Represses a number of genes involved in the response to DNA damage (SOS response), including recA and lexA. In the presence of single-stranded DNA, RecA interacts with LexA causing an autocatalytic cleavage which disrupts the DNA-binding part of LexA, leading to derepression of the SOS regulon and eventually DNA repair. The chain is LexA repressor 2 from Xanthomonas oryzae pv. oryzae (strain KACC10331 / KXO85).